Here is a 431-residue protein sequence, read N- to C-terminus: Enolase (431 aa).

Gln-164 contributes to the (2R)-2-phosphoglycerate binding site. The active-site Proton donor is Glu-206. 3 residues coordinate Mg(2+): Asp-243, Glu-288, and Asp-315. The (2R)-2-phosphoglycerate site is built by Lys-340, Arg-369, Ser-370, and Lys-391. Lys-340 acts as the Proton acceptor in catalysis.

It belongs to the enolase family. Mg(2+) serves as cofactor.

It localises to the cytoplasm. It is found in the secreted. The protein localises to the cell surface. It carries out the reaction (2R)-2-phosphoglycerate = phosphoenolpyruvate + H2O. The protein operates within carbohydrate degradation; glycolysis; pyruvate from D-glyceraldehyde 3-phosphate: step 4/5. Functionally, catalyzes the reversible conversion of 2-phosphoglycerate (2-PG) into phosphoenolpyruvate (PEP). It is essential for the degradation of carbohydrates via glycolysis. This chain is Enolase, found in Fervidobacterium nodosum (strain ATCC 35602 / DSM 5306 / Rt17-B1).